A 186-amino-acid chain; its full sequence is Elongation factor P (186 aa).

Belongs to the elongation factor P family.

The protein localises to the cytoplasm. Its pathway is protein biosynthesis; polypeptide chain elongation. Its function is as follows. Involved in peptide bond synthesis. Stimulates efficient translation and peptide-bond synthesis on native or reconstituted 70S ribosomes in vitro. Probably functions indirectly by altering the affinity of the ribosome for aminoacyl-tRNA, thus increasing their reactivity as acceptors for peptidyl transferase. In Crocosphaera subtropica (strain ATCC 51142 / BH68) (Cyanothece sp. (strain ATCC 51142)), this protein is Elongation factor P.